Consider the following 437-residue polypeptide: GTPase Der (437 aa).

EngA-type G domains follow at residues 4–168 (PVVA…PAED) and 177–352 (IRVS…QAHS). GTP is bound by residues 10–17 (GRPNVGKS), 57–61 (DTGGI), 120–123 (NKAD), 183–190 (GRPNVGKS), 230–234 (DTAGM), and 295–298 (NKWD). The KH-like domain occupies 353–437 (MRIPTAVLND…PVRIWTRKKT (85 aa)).

Belongs to the TRAFAC class TrmE-Era-EngA-EngB-Septin-like GTPase superfamily. EngA (Der) GTPase family. As to quaternary structure, associates with the 50S ribosomal subunit.

Its function is as follows. GTPase that plays an essential role in the late steps of ribosome biogenesis. This Brevibacillus brevis (strain 47 / JCM 6285 / NBRC 100599) protein is GTPase Der.